The primary structure comprises 189 residues: Calcyphosin (189 aa).

4 consecutive EF-hand domains span residues 21-56 (SGIQGVARFFRRLDQDGSRSLDVRELQRGLAELGLV), 57-92 (LDTAEMEGVCRRWDRDGSGTLDLEEFLRALRPPMSQ), 93-128 (AREAVVTAAFAKLDRSGDGVVTVDDLRGVYSGRTHP), and 136-172 (TEEQVLRHFLDNFDSSEKDGQVTLAEFQDYYSGVSAS). 14 residues coordinate Ca(2+): aspartate 34, aspartate 36, serine 38, serine 40, glutamate 45, aspartate 70, aspartate 72, serine 74, threonine 76, glutamate 81, aspartate 106, serine 108, aspartate 110, and aspartate 117. Position 40 is a phosphoserine; by PKA (serine 40).

In terms of assembly, monomer. Does not form oligomers in the presence of calcium.

The protein localises to the cytoplasm. Calcium-binding protein. May play a role in cellular signaling events (Potential). This chain is Calcyphosin (CAPS), found in Bos taurus (Bovine).